The sequence spans 342 residues: UDP-N-acetylenolpyruvoylglucosamine reductase (342 aa).

The 176-residue stretch at 17 to 192 (RFEAAARYAA…AEVTFALPVD (176 aa)) folds into the FAD-binding PCMH-type domain. The active site involves Arg168. The active-site Proton donor is Ser242. Glu338 is an active-site residue.

It belongs to the MurB family. FAD serves as cofactor.

Its subcellular location is the cytoplasm. The catalysed reaction is UDP-N-acetyl-alpha-D-muramate + NADP(+) = UDP-N-acetyl-3-O-(1-carboxyvinyl)-alpha-D-glucosamine + NADPH + H(+). It participates in cell wall biogenesis; peptidoglycan biosynthesis. In terms of biological role, cell wall formation. This is UDP-N-acetylenolpyruvoylglucosamine reductase from Ralstonia nicotianae (strain ATCC BAA-1114 / GMI1000) (Ralstonia solanacearum).